Reading from the N-terminus, the 194-residue chain is uncharacterized protein (194 aa).

This is an uncharacterized protein from Aquifex aeolicus (strain VF5).